The chain runs to 1592 residues: Serine/threonine-protein kinase mrck-1 (1592 aa).

Residues 1–954 form an involved in homo-dimerization region; that stretch reads MAEPPPDDSA…IFSPVSISAM (954 aa). Residues 83–351 form the Protein kinase domain; sequence FEVLKVIGKG…LSDFQLHPFF (269 aa). ATP-binding positions include 89–97 and Lys112; that span reads IGKGAFGEV. The Proton acceptor role is filled by Asp207. Positions 352-426 constitute an AGC-kinase C-terminal domain; the sequence is EGIDWNTIRD…THGSLLSDAR (75 aa). Residue Ser415 is modified to Phosphoserine. Tyr416 is modified (phosphotyrosine). 2 coiled-coil regions span residues 444-782 and 811-871; these read ELME…KNNS and LDLQ…IENS. A compositionally biased stretch (polar residues) spans 782–796; that stretch reads SPLTTSNYIQNTPSG. Residues 782–801 are disordered; it reads SPLTTSNYIQNTPSGWGSRR. The segment at 955 to 1534 is involved in binding to membranes, with a preference for di-phosphorylated phosphoinositides (PIPs); that stretch reads ERGHNFERMK…FRTIGKDDRS (580 aa). A Phorbol-ester/DAG-type zinc finger spans residues 957 to 1007; it reads GHNFERMKIKTPTKCGHCTSILIGLDRQGLFCQSCQYACHVSCAERVSQSC. The Zn(2+) site is built by His958, Cys971, Cys974, Cys988, Cys991, His996, Cys999, and Cys1007. One can recognise a PH domain in the interval 1026-1154; the sequence is GTAYEGLVKT…WVVALSELKT (129 aa). Residues 1181–1479 form the CNH domain; the sequence is IRVAQCCAII…KPLSGDGILS (299 aa). The region spanning 1544-1557 is the CRIB domain; it reads ISTPSDFMHIVHMG. The interval 1544-1557 is involved in interaction with cdc-42 (GTP-bound). Deletion prevents rescue of a null mutant; furthermore deleted form of mrck-1 is no longer recruited to the cell cortex and instead appears to be completely cytoplasmic; that stretch reads ISTPSDFMHIVHMG.

This sequence belongs to the protein kinase superfamily. AGC Ser/Thr protein kinase family. DMPK subfamily. Homodimer, via N-terminal domains. Interacts (via the CRIB domain) with cdc-42 (GTP-bound), but with a lower affinity for cdc-42 bound to GDP; the interaction is direct and may play a role in the recruitment of mrck-1 to the apical membrane. Mg(2+) is required as a cofactor. As to expression, expressed in embryonic and L4 larval seam cells and in embryonic dorsal and ventral epidermal cells. Also expressed in the pharynx throughout development and in sublateral nerve cords in the L4 larva.

The protein localises to the cytoplasm. It localises to the cell cortex. The catalysed reaction is L-seryl-[protein] + ATP = O-phospho-L-seryl-[protein] + ADP + H(+). It carries out the reaction L-threonyl-[protein] + ATP = O-phospho-L-threonyl-[protein] + ADP + H(+). Its function is as follows. Serine/threonine-protein kinase. Involved in regulating endoderm precursor cell movements during early gastrulation; activates apical myosin and thereby increases actomyosin contractility and tension in the apical cell cortex, probably as a result of recruitment of mrck-1 to the cortex by a combination of interaction with active cdc-42 and membrane binding. May phosphorylate and inactivate the phosphatase mel-11, and thereby contribute to the regulation of myosin II contractility during embryonic elongation. Involved in controlling canal length and Golgi/ER integrity during excretory canal elongation. The protein is Serine/threonine-protein kinase mrck-1 of Caenorhabditis elegans.